Here is a 142-residue protein sequence, read N- to C-terminus: Large ribosomal subunit protein uL11 (142 aa).

Belongs to the universal ribosomal protein uL11 family. Part of the ribosomal stalk of the 50S ribosomal subunit. Interacts with L10 and the large rRNA to form the base of the stalk. L10 forms an elongated spine to which L12 dimers bind in a sequential fashion forming a multimeric L10(L12)X complex. Post-translationally, one or more lysine residues are methylated.

Its function is as follows. Forms part of the ribosomal stalk which helps the ribosome interact with GTP-bound translation factors. The chain is Large ribosomal subunit protein uL11 from Dichelobacter nodosus (strain VCS1703A).